The following is a 291-amino-acid chain: Diaminopimelate epimerase (291 aa).

Substrate-binding residues include Asn-11 and Asn-78. Cys-87 functions as the Proton donor in the catalytic mechanism. Residues 88 to 89 (GN), Asn-166, Asn-200, and 218 to 219 (ER) contribute to the substrate site. Cys-227 functions as the Proton acceptor in the catalytic mechanism. 228 to 229 (GT) provides a ligand contact to substrate.

The protein belongs to the diaminopimelate epimerase family. Homodimer.

The protein resides in the cytoplasm. The enzyme catalyses (2S,6S)-2,6-diaminopimelate = meso-2,6-diaminopimelate. It functions in the pathway amino-acid biosynthesis; L-lysine biosynthesis via DAP pathway; DL-2,6-diaminopimelate from LL-2,6-diaminopimelate: step 1/1. Functionally, catalyzes the stereoinversion of LL-2,6-diaminopimelate (L,L-DAP) to meso-diaminopimelate (meso-DAP), a precursor of L-lysine and an essential component of the bacterial peptidoglycan. This Mycolicibacterium smegmatis (strain ATCC 700084 / mc(2)155) (Mycobacterium smegmatis) protein is Diaminopimelate epimerase.